We begin with the raw amino-acid sequence, 293 residues long: Protoheme IX farnesyltransferase (293 aa).

The next 9 membrane-spanning stretches (helical) occupy residues 9–29 (LIKP…FLLA), 38–58 (YIIL…SCVL), 86–106 (FVKN…LFLG), 111–131 (LLTI…YSLW), 137–157 (IYST…GYCT), 167–187 (WLLF…ITIF), 211–231 (IHMI…TVLG), 234–254 (SYTF…TGWY), and 271–291 (ILSI…SIFI).

It belongs to the UbiA prenyltransferase family. Protoheme IX farnesyltransferase subfamily.

It is found in the cell inner membrane. It carries out the reaction heme b + (2E,6E)-farnesyl diphosphate + H2O = Fe(II)-heme o + diphosphate. Its pathway is porphyrin-containing compound metabolism; heme O biosynthesis; heme O from protoheme: step 1/1. Functionally, converts heme B (protoheme IX) to heme O by substitution of the vinyl group on carbon 2 of heme B porphyrin ring with a hydroxyethyl farnesyl side group. The sequence is that of Protoheme IX farnesyltransferase from Blochmanniella floridana.